The primary structure comprises 67 residues: Ubiquinol-cytochrome c reductase complex assembly factor 6 (67 aa).

The Mitochondrial matrix portion of the chain corresponds to 1-8 (MPGGVPWS). The chain crosses the membrane as a helical; Signal-anchor for type II membrane protein span at residues 9-25 (AYLKMLSSSLLAMCAGA). Over 26-67 (QVVHWYYRPDLTIPEIPPKPGELKTELLGLKERRHEPHVSQQ) the chain is Mitochondrial intermembrane.

The protein belongs to the UQCC6 family. As to quaternary structure, interacts with UQCRC1. Interacts with UQCRQ. Interacts with UQCC5. Forms a complex, named COMB/coordinator of mitochondrial CYTB biogenesis, composed of UQCC1, UQCC2, UQCC4, UQCC5 and UQCC6; stabilizes nascent cytochrome b/MT-CYB and promotes its membrane insertion. Forms a complex, named COMA, composed of UQCC1, UQCC2 and UQCC4; activates MT-CYB translation. Forms a complex, named COMC, composed of UQCC1, UQCC2; UQCC3 and UQCC4; mediates MT-CYB hemylation and association with the first nuclear-encoded complex III subunit UQCRQ. Interacts with MT-CYB. In terms of tissue distribution, highly expressed in brown adipose, cardiac and skeletal muscle (at protein level).

The protein resides in the mitochondrion inner membrane. Required for the assembly and stability of the mitochondrial ubiquinol-cytochrome c reductase complex (complex III or cytochrome b-c1 complex), a multisubunit transmembrane complex that is part of the mitochondrial electron transport chain (ETC) which drives oxidative phosphorylation. Mediates early complex III biogenesis. Participates in regulating the levels of electron transport chain proteins, and therefore energy supply, in response to changes in energy demand. Also required for cytochrome c oxidase complex (complex IV) assembly. The polypeptide is Ubiquinol-cytochrome c reductase complex assembly factor 6 (Mus musculus (Mouse)).